We begin with the raw amino-acid sequence, 216 residues long: Pyridoxine/pyridoxamine 5'-phosphate oxidase (216 aa).

Residues Arg12–Tyr15 and Lys70 contribute to the substrate site. FMN is bound by residues Arg65–Lys70, Tyr80–Thr81, Arg86, Lys87, and Gln109. Substrate is bound by residues Tyr127, Arg131, and Ser135. Residues Gln144 to Ser145 and Trp189 each bind FMN. Arg195–His197 is a substrate binding site. Arg199 provides a ligand contact to FMN.

The protein belongs to the pyridoxamine 5'-phosphate oxidase family. In terms of assembly, homodimer. FMN is required as a cofactor.

It carries out the reaction pyridoxamine 5'-phosphate + O2 + H2O = pyridoxal 5'-phosphate + H2O2 + NH4(+). It catalyses the reaction pyridoxine 5'-phosphate + O2 = pyridoxal 5'-phosphate + H2O2. The protein operates within cofactor metabolism; pyridoxal 5'-phosphate salvage; pyridoxal 5'-phosphate from pyridoxamine 5'-phosphate: step 1/1. It functions in the pathway cofactor metabolism; pyridoxal 5'-phosphate salvage; pyridoxal 5'-phosphate from pyridoxine 5'-phosphate: step 1/1. Its function is as follows. Catalyzes the oxidation of either pyridoxine 5'-phosphate (PNP) or pyridoxamine 5'-phosphate (PMP) into pyridoxal 5'-phosphate (PLP). The protein is Pyridoxine/pyridoxamine 5'-phosphate oxidase of Baumannia cicadellinicola subsp. Homalodisca coagulata.